We begin with the raw amino-acid sequence, 158 residues long: NAD(P)H-quinone oxidoreductase subunit J, chloroplastic (158 aa).

The protein belongs to the complex I 30 kDa subunit family. As to quaternary structure, NDH is composed of at least 16 different subunits, 5 of which are encoded in the nucleus.

It localises to the plastid. The protein resides in the chloroplast thylakoid membrane. The enzyme catalyses a plastoquinone + NADH + (n+1) H(+)(in) = a plastoquinol + NAD(+) + n H(+)(out). It carries out the reaction a plastoquinone + NADPH + (n+1) H(+)(in) = a plastoquinol + NADP(+) + n H(+)(out). Functionally, NDH shuttles electrons from NAD(P)H:plastoquinone, via FMN and iron-sulfur (Fe-S) centers, to quinones in the photosynthetic chain and possibly in a chloroplast respiratory chain. The immediate electron acceptor for the enzyme in this species is believed to be plastoquinone. Couples the redox reaction to proton translocation, and thus conserves the redox energy in a proton gradient. This is NAD(P)H-quinone oxidoreductase subunit J, chloroplastic from Dioscorea elephantipes (Elephant's foot yam).